Here is a 68-residue protein sequence, read N- to C-terminus: Protein ShdD (68 aa).

In terms of biological role, involved in the non-oxidative decarboxylation and detoxification of phenolic derivatives under anaerobic conditions, however the precise biochemical function of ShdD in metabolism of phenolic acid is unknown. The chain is Protein ShdD from Sedimentibacter hydroxybenzoicus (Clostridium hydroxybenzoicum).